The chain runs to 509 residues: Surface lipoprotein assembly modifier (509 aa).

The first 32 residues, 1–32 (MNLMINLKPLTFLPFFGRLVFLSGVIYNTAWA), serve as a signal peptide directing secretion. An N-terminal domain region spans residues 33–204 (NTVIPVDNSR…SYIDTINQRD (172 aa)). The interval 43 to 72 (PDETFSQTSPKQHLFSQKPKPTEPTSSASS) is disordered. Positions 46–57 (TFSQTSPKQHLF) are enriched in polar residues. Residues 120–153 (FLLKWAQAVVARKQGKLNESVRLYRQIIAEKPNL) form a TPR repeat. The C-terminal probable beta barrel stretch occupies residues 205-509 (SWNVYGGVNY…RIYLTFSKTF (305 aa)). Beta stranded transmembrane passes span 206 to 216 (WNVYGGVNYLH), 245 to 256 (LSYFINLSKNWS), 261 to 270 (FFTEFSADIN), 284 to 294 (STRLNLGGGYR), 298 to 308 (TEVKLMPFVEQ), 331 to 341 (SGINLDVDYWL), 345 to 355 (WKISTVLEYTE), 371 to 381 (YSISNTLIYMP), 386 to 395 (FWFVGLDYYQ), 408 to 417 (QGIRLGWGQE), 423 to 432 (STRLQTSYAT), 461 to 470 (GVNFTIWHRS), 476 to 485 (ITPKITWAYQ), and 499 to 509 (NRIYLTFSKTF).

The protein belongs to the Slam family.

It is found in the cell outer membrane. Functionally, required for correct export to the cell surface of some cell outer membrane lipoproteins (tested with PM1514) upon heterologous expression in E.coli and probably also in Pasteurella. The sequence is that of Surface lipoprotein assembly modifier from Pasteurella multocida (strain Pm70).